The sequence spans 222 residues: Small ribosomal subunit protein eS1 (222 aa).

It belongs to the eukaryotic ribosomal protein eS1 family.

This Pyrobaculum islandicum (strain DSM 4184 / JCM 9189 / GEO3) protein is Small ribosomal subunit protein eS1.